Reading from the N-terminus, the 333-residue chain is MQISVNEFLTPRHIDVQVVSPTRAKITLEPLERGFGHTLGNALRRILLSSMPGCAVVEAEIDGVLHEYSAIEGVQEDVIEILLNLKGLAIKLHGRDEVTLTLSKKGSGVVTAADIQLDHDVEIVNPDHVIANLASNGALNMKLVVARGRGYEPADSRQSDEDESRSIGRLQLDSSFSPVRRIAYVVENARVEQRTNLDKLVIDLETNGTLDPEEAIRRAATILQQQLAAFVDLKGDSEPVVVEQEDEIDPILLRPVDDLELTVRSANCLKAENIYYIGDLIQRTEVELLKTPNLGKKSLTEIKDVLASRGLSLGMRLDNWPPASLKKDDKATA.

An alpha N-terminal domain (alpha-NTD) region spans residues 1–234 (MQISVNEFLT…QQLAAFVDLK (234 aa)). The tract at residues 248 to 333 (IDPILLRPVD…SLKKDDKATA (86 aa)) is alpha C-terminal domain (alpha-CTD).

The protein belongs to the RNA polymerase alpha chain family. In terms of assembly, homodimer. The RNAP catalytic core consists of 2 alpha, 1 beta, 1 beta' and 1 omega subunit. When a sigma factor is associated with the core the holoenzyme is formed, which can initiate transcription.

It catalyses the reaction RNA(n) + a ribonucleoside 5'-triphosphate = RNA(n+1) + diphosphate. Its function is as follows. DNA-dependent RNA polymerase catalyzes the transcription of DNA into RNA using the four ribonucleoside triphosphates as substrates. This is DNA-directed RNA polymerase subunit alpha from Pseudomonas fluorescens (strain ATCC BAA-477 / NRRL B-23932 / Pf-5).